A 341-amino-acid polypeptide reads, in one-letter code: Aspartate carbamoyltransferase catalytic subunit (341 aa).

Carbamoyl phosphate-binding residues include Arg-89 and Thr-90. Lys-117 is an L-aspartate binding site. Residues Arg-139, His-169, and Gln-172 each contribute to the carbamoyl phosphate site. L-aspartate contacts are provided by Arg-202 and Arg-257. Carbamoyl phosphate-binding residues include Gly-298 and Pro-299.

This sequence belongs to the aspartate/ornithine carbamoyltransferase superfamily. ATCase family. As to quaternary structure, heterododecamer (2C3:3R2) of six catalytic PyrB chains organized as two trimers (C3), and six regulatory PyrI chains organized as three dimers (R2).

The catalysed reaction is carbamoyl phosphate + L-aspartate = N-carbamoyl-L-aspartate + phosphate + H(+). It participates in pyrimidine metabolism; UMP biosynthesis via de novo pathway; (S)-dihydroorotate from bicarbonate: step 2/3. In terms of biological role, catalyzes the condensation of carbamoyl phosphate and aspartate to form carbamoyl aspartate and inorganic phosphate, the committed step in the de novo pyrimidine nucleotide biosynthesis pathway. The chain is Aspartate carbamoyltransferase catalytic subunit from Paraburkholderia phytofirmans (strain DSM 17436 / LMG 22146 / PsJN) (Burkholderia phytofirmans).